The primary structure comprises 209 residues: Ribonuclease HII (209 aa).

The RNase H type-2 domain maps to 7 to 198; it reads GPVAGVDEAG…VAKAHQEWLH (192 aa). A divalent metal cation is bound by residues Asp13, Glu14, and Asp107.

It belongs to the RNase HII family. It depends on Mn(2+) as a cofactor. Mg(2+) serves as cofactor.

It is found in the cytoplasm. It catalyses the reaction Endonucleolytic cleavage to 5'-phosphomonoester.. Its function is as follows. Endonuclease that specifically degrades the RNA of RNA-DNA hybrids. This Corynebacterium glutamicum (strain R) protein is Ribonuclease HII.